We begin with the raw amino-acid sequence, 247 residues long: Lipoprotein-releasing system ATP-binding protein LolD 2 (247 aa).

An ABC transporter domain is found at 19–247 (LEARKLVKSY…QDGRLQACGG (229 aa)). An ATP-binding site is contributed by 56–63 (GASGSGKT).

Belongs to the ABC transporter superfamily. Lipoprotein translocase (TC 3.A.1.125) family. As to quaternary structure, the complex is composed of two ATP-binding proteins (LolD) and two transmembrane proteins (LolC and LolE).

It is found in the cell inner membrane. Functionally, part of the ABC transporter complex LolCDE involved in the translocation of mature outer membrane-directed lipoproteins, from the inner membrane to the periplasmic chaperone, LolA. Responsible for the formation of the LolA-lipoprotein complex in an ATP-dependent manner. This is Lipoprotein-releasing system ATP-binding protein LolD 2 from Chlorobaculum tepidum (strain ATCC 49652 / DSM 12025 / NBRC 103806 / TLS) (Chlorobium tepidum).